The following is a 296-amino-acid chain: 33 kDa chaperonin (296 aa).

2 cysteine pairs are disulfide-bonded: Cys238/Cys240 and Cys271/Cys274.

Belongs to the HSP33 family. In terms of processing, under oxidizing conditions two disulfide bonds are formed involving the reactive cysteines. Under reducing conditions zinc is bound to the reactive cysteines and the protein is inactive.

It localises to the cytoplasm. In terms of biological role, redox regulated molecular chaperone. Protects both thermally unfolding and oxidatively damaged proteins from irreversible aggregation. Plays an important role in the bacterial defense system toward oxidative stress. The polypeptide is 33 kDa chaperonin (Clostridium botulinum (strain Okra / Type B1)).